A 170-amino-acid chain; its full sequence is Protein AIG2 A (170 aa).

15-20 contacts substrate; it reads YGSFQE. E83 functions as the Proton acceptor in the catalytic mechanism. Residues 147-162 show a composition bias toward basic and acidic residues; it reads KNPNGRSREEFEKFVQ. A disordered region spans residues 147 to 170; it reads KNPNGRSREEFEKFVQDDSSPASA.

It belongs to the gamma-glutamylcyclotransferase family. In terms of tissue distribution, ubiquitous.

Putative gamma-glutamylcyclotransferase. This Arabidopsis thaliana (Mouse-ear cress) protein is Protein AIG2 A.